Reading from the N-terminus, the 214-residue chain is DNA-binding protein HupB (214 aa).

The residue at position 3 (lysine 3) is an N6-acetyllysine. Lysine 3 carries the post-translational modification N6-succinyllysine. 2 positions are modified to phosphothreonine: threonine 43 and threonine 45. Residues lysine 72, lysine 86, and lysine 103 each carry the N6-acetyllysine modification. The interval 100–214 (PAVKRGVGAS…KKATARRGRK (115 aa)) is disordered. The span at 102-112 (VKRGVGASAAK) shows a compositional bias: low complexity. Residue lysine 113 is modified to N6-succinyllysine. Residues 113 to 214 (KVAKKAPAKK…KKATARRGRK (102 aa)) show a composition bias toward basic residues. N6-acetyllysine is present on residues lysine 116 and lysine 133. Lysine 142 carries the N6-succinyllysine modification. An N6-acetyllysine mark is found at lysine 146 and lysine 167.

This sequence belongs to the bacterial histone-like protein family. Long actinobacterial subfamily. In terms of assembly, oligomerizes. Homodimer; the crystallized protein is missing the C-terminal 105 residues. Interacts with topoisomerase 1 (topA). Interacts with Eis. Interacts with NAD-dependent protein deacylase NPD (MRA_1161). Interacts with MRA_0812 CoA transferase. Post-translationally, phosphorylated in vivo on Ser and Thr-residues; the protein is degraded during purification so most sites were not identified, but at least one of Thr-43 and/or Thr-45 are modified in vivo. In vitro at least PknE, PknF and PknB phosphorylate HupB; PknE is the most active and phosphorylates many sites in vitro including Thr-43 and Thr-45. Acetylated on 8 Lys residues in vivo (probably by Eis). In vitro acetylated by Eis on 28 residues (strains H37Rv and H37Ra), many more than those identified in vivo. Also acetylated by MRA_0812. Deacetylated in vitro by NAD-dependent protein deacylase NPD (MRA_1161). In terms of processing, succinylated in vivo and in vitro by MRA_0812 and by Eis; only 3 residues are found to be succinylated in vivo, while 27 are modifed in vitro by MRA_0812 and 32 are succinylated by Eis. NAD-dependent protein deacylase (MRA_1161) desuccinylates this protein.

It is found in the cytoplasm. It localises to the nucleoid. The enzyme catalyses 4 Fe(2+) + O2 + 4 H(+) = 4 Fe(3+) + 2 H2O. Two trans-stilbene derivatives, 4,4'-[(E)-ethene-1,2 diylbis({5[(phenylcarbonyl)amino]benzene-2,1-diyl}sulfonylimino)] dibenzoic acid and its methoxy derivative 4,4'-[1,2-ethenediylbis({5-[(4-methoxybenzoyl)amino]-2,1phenylene}sulfonylimino)] dibenzoic acid, respectively SD1 and SD4, inhibit DNA binding with 50% inhibition at 20 uM for SD1 and 1.7 uM for SD4. SD1 and SD4 have minimal inhibitory concentrations of 400 and 800 uM on strain H37Ra respectively. A nucleoid-associated protein (NAP) that plays a role in local chromosome architecture. Binds DNA non-sequence specifically; in vitro phosphorylation of an N-terminal fragment decreases DNA-binding. Stimulates supercoiling relaxation by topoisomerase 1 (Top1, topA), at higher than 80 uM inhibits relaxation, has no effect on DNA gyrase; the effect is independent of DNA-binding. Increases the intervening strand passage activity of Top1 that occurs between the two catalytic trans-esterification reactions. Does not bind ssDNA, probably helps condense chromosomes. Binds dsDNA; in vitro acetylated protein binds 10-fold less well to DNA (note in vitro acetylated protein is more heavily modified than in vivo modified protein). In vitro acetylated protein compacts DNA less well than unmodified protein. In vitro succinylated DNA bind dsDNA less well than unmodified protein (note in vitro succinylated protein is more heavily modified than in vivo modified protein). In terms of biological role, has ferroxidase activity, converts Fe(2+) into Fe(3+). Binds Fe(3+) but not Fe(2+); prevents the generation of hydroxyl radicals by the Fenton reaction and thus protects DNA from damage. May function in iron storage. Functionally, required for biofilm formation; trimethylation by recombinant human SUV39H1 (a histone methyltransferase) inhibits biofilm formation. Probably influences transcription. RNase E and HupB jointly contribute to cellular adaptation to changing growth conditions and survival during antibiotic treatment and in the host. This chain is DNA-binding protein HupB, found in Mycobacterium tuberculosis (strain ATCC 25177 / H37Ra).